Here is a 175-residue protein sequence, read N- to C-terminus: Endoribonuclease YbeY (175 aa).

Residues His-137, His-141, and His-147 each coordinate Zn(2+).

The protein belongs to the endoribonuclease YbeY family. It depends on Zn(2+) as a cofactor.

The protein resides in the cytoplasm. Its function is as follows. Single strand-specific metallo-endoribonuclease involved in late-stage 70S ribosome quality control and in maturation of the 3' terminus of the 16S rRNA. The chain is Endoribonuclease YbeY from Burkholderia ambifaria (strain ATCC BAA-244 / DSM 16087 / CCUG 44356 / LMG 19182 / AMMD) (Burkholderia cepacia (strain AMMD)).